A 174-amino-acid polypeptide reads, in one-letter code: MALREIIILPDKQLRLVSKPIEKVTTEIRKLADDMFETMYDAPGIGLAAIQIAQPLRLITMDLAKRDENGETKPEPRVFINPEVIASSEELSVYEEGCLSIPEYYEEVERPAKVRVRFTDLDGKVHEEDAEGLYATCIQHEIDHLNGVLFVDYLSKLKRDRVLKKFEKAAKRAE.

Fe cation contacts are provided by cysteine 98 and histidine 140. Glutamate 141 is a catalytic residue. Position 144 (histidine 144) interacts with Fe cation.

This sequence belongs to the polypeptide deformylase family. Fe(2+) serves as cofactor.

The catalysed reaction is N-terminal N-formyl-L-methionyl-[peptide] + H2O = N-terminal L-methionyl-[peptide] + formate. In terms of biological role, removes the formyl group from the N-terminal Met of newly synthesized proteins. Requires at least a dipeptide for an efficient rate of reaction. N-terminal L-methionine is a prerequisite for activity but the enzyme has broad specificity at other positions. This Bradyrhizobium diazoefficiens (strain JCM 10833 / BCRC 13528 / IAM 13628 / NBRC 14792 / USDA 110) protein is Peptide deformylase.